A 424-amino-acid chain; its full sequence is Serine--tRNA ligase (424 aa).

230-232 (TAE) provides a ligand contact to L-serine. 261 to 263 (RSE) contacts ATP. Glutamate 284 is a binding site for L-serine. 348–351 (EISS) is an ATP binding site. Serine 384 contacts L-serine.

The protein belongs to the class-II aminoacyl-tRNA synthetase family. Type-1 seryl-tRNA synthetase subfamily. In terms of assembly, homodimer. The tRNA molecule binds across the dimer.

The protein localises to the cytoplasm. It carries out the reaction tRNA(Ser) + L-serine + ATP = L-seryl-tRNA(Ser) + AMP + diphosphate + H(+). The catalysed reaction is tRNA(Sec) + L-serine + ATP = L-seryl-tRNA(Sec) + AMP + diphosphate + H(+). It participates in aminoacyl-tRNA biosynthesis; selenocysteinyl-tRNA(Sec) biosynthesis; L-seryl-tRNA(Sec) from L-serine and tRNA(Sec): step 1/1. In terms of biological role, catalyzes the attachment of serine to tRNA(Ser). Is also able to aminoacylate tRNA(Sec) with serine, to form the misacylated tRNA L-seryl-tRNA(Sec), which will be further converted into selenocysteinyl-tRNA(Sec). This Desulfatibacillum aliphaticivorans protein is Serine--tRNA ligase.